Here is a 195-residue protein sequence, read N- to C-terminus: Probable GTP-binding protein EngB (195 aa).

Positions 24–195 (DIPEIALAGR…AAWDAILSKI (172 aa)) constitute an EngB-type G domain. Residues 32–39 (GRSNVGKS), 59–63 (GKTQL), 77–80 (DVPG), 144–147 (TKAD), and 176–178 (FSS) each bind GTP. Residues S39 and T61 each coordinate Mg(2+).

This sequence belongs to the TRAFAC class TrmE-Era-EngA-EngB-Septin-like GTPase superfamily. EngB GTPase family. The cofactor is Mg(2+).

Its function is as follows. Necessary for normal cell division and for the maintenance of normal septation. In Streptococcus sanguinis (strain SK36), this protein is Probable GTP-binding protein EngB.